The chain runs to 608 residues: Nuclear protein localization protein 4 homolog (608 aa).

Alanine 2 bears the N-acetylalanine mark. The residue at position 179 (lysine 179) is an N6-acetyllysine. The MPN domain occupies 226–363; the sequence is IMFENHTVAD…ICRLSPDGHF (138 aa). The RanBP2-type zinc-finger motif lies at 580-608; that stretch reads TSAMWACQHCTFMNQPGTGHCEMCSLPRT.

This sequence belongs to the NPL4 family. Heterodimer with UFD1. The heterodimer binds ubiquitinated proteins. The heterodimer binds to VCP and inhibits Golgi membrane fusion. Interacts with ZFAND2B; probably through VCP.

The protein resides in the cytoplasm. Its subcellular location is the cytosol. It is found in the endoplasmic reticulum. It localises to the nucleus. The protein operates within protein degradation; proteasomal ubiquitin-dependent pathway. The ternary complex containing UFD1, VCP and NPLOC4 binds ubiquitinated proteins and is necessary for the export of misfolded proteins from the ER to the cytoplasm, where they are degraded by the proteasome. The NPLOC4-UFD1-VCP complex regulates spindle disassembly at the end of mitosis and is necessary for the formation of a closed nuclear envelope. Acts as a negative regulator of type I interferon production via the complex formed with VCP and UFD1, which binds to RIGI and recruits RNF125 to promote ubiquitination and degradation of RIGI. The polypeptide is Nuclear protein localization protein 4 homolog (Nploc4) (Mus musculus (Mouse)).